The sequence spans 343 residues: Anthranilate phosphoribosyltransferase (343 aa).

5-phospho-alpha-D-ribose 1-diphosphate is bound by residues Gly-84, 87–88, Thr-92, 94–97, 112–120, and Ser-124; these read GD, NIST, and KHGNRGVSS. Gly-84 is an anthranilate binding site. Residue Ser-96 coordinates Mg(2+). Asn-115 contacts anthranilate. Residue Arg-170 coordinates anthranilate. 2 residues coordinate Mg(2+): Asp-229 and Glu-230.

It belongs to the anthranilate phosphoribosyltransferase family. As to quaternary structure, homodimer. Mg(2+) is required as a cofactor.

The enzyme catalyses N-(5-phospho-beta-D-ribosyl)anthranilate + diphosphate = 5-phospho-alpha-D-ribose 1-diphosphate + anthranilate. Its pathway is amino-acid biosynthesis; L-tryptophan biosynthesis; L-tryptophan from chorismate: step 2/5. Catalyzes the transfer of the phosphoribosyl group of 5-phosphorylribose-1-pyrophosphate (PRPP) to anthranilate to yield N-(5'-phosphoribosyl)-anthranilate (PRA). The polypeptide is Anthranilate phosphoribosyltransferase (Burkholderia thailandensis (strain ATCC 700388 / DSM 13276 / CCUG 48851 / CIP 106301 / E264)).